The primary structure comprises 230 residues: Large ribosomal subunit protein uL1 (230 aa).

It belongs to the universal ribosomal protein uL1 family. Part of the 50S ribosomal subunit.

In terms of biological role, binds directly to 23S rRNA. The L1 stalk is quite mobile in the ribosome, and is involved in E site tRNA release. Functionally, protein L1 is also a translational repressor protein, it controls the translation of the L11 operon by binding to its mRNA. This is Large ribosomal subunit protein uL1 from Nitrosomonas europaea (strain ATCC 19718 / CIP 103999 / KCTC 2705 / NBRC 14298).